Here is a 449-residue protein sequence, read N- to C-terminus: Putative F-box/LRR-repeat protein 23 (449 aa).

LRR repeat units lie at residues 14 to 37 and 39 to 64; these read KLWR…HLKL and GNGL…DLRR. One can recognise an F-box domain in the interval 178 to 225; that stretch reads LRNWAELPSKLTSSILLRLGAIEILQNAQKVCKPWHRVCKDPSMWRKI. LRR repeat units lie at residues 261-286, 287-311, 312-337, 344-367, 369-394, and 401-427; these read WYYG…GLVR, CFPI…LEVS, YCLF…KLNR, SNSG…HLQL, GNGL…DLRQ, and VGDL…DSDD.

This chain is Putative F-box/LRR-repeat protein 23 (FBL23), found in Arabidopsis thaliana (Mouse-ear cress).